A 132-amino-acid chain; its full sequence is Small ribosomal subunit protein bS6 (132 aa).

The disordered stretch occupies residues 96–132 (HAEGPSIQMQKRDERERGDRGDRPDRGDRGERGGFRR). The segment covering 105–132 (QKRDERERGDRGDRPDRGDRGERGGFRR) has biased composition (basic and acidic residues).

The protein belongs to the bacterial ribosomal protein bS6 family.

In terms of biological role, binds together with bS18 to 16S ribosomal RNA. The chain is Small ribosomal subunit protein bS6 from Cereibacter sphaeroides (strain ATCC 17025 / ATH 2.4.3) (Rhodobacter sphaeroides).